The primary structure comprises 378 residues: Beta-1,3-galactosyltransferase pvg3 (378 aa).

Over 1-8 (MFSNSKKK) the chain is Cytoplasmic. A helical; Signal-anchor for type II membrane protein transmembrane segment spans residues 9 to 29 (IFLYVLIAGVATFSFAFLVLN). Residues 30-378 (RLQAEEHSLA…ATIPLPSLDV (349 aa)) are Lumenal-facing. N-linked (GlcNAc...) asparagine glycosylation is found at N53, N97, N180, and N354.

This sequence belongs to the glycosyltransferase 31 family.

It is found in the endoplasmic reticulum membrane. Its subcellular location is the golgi apparatus. The protein localises to the golgi stack membrane. The enzyme catalyses 3-O-(beta-D-galactosyl-(1-&gt;4)-beta-D-xylosyl)-L-seryl-[protein] + UDP-alpha-D-galactose = 3-O-(beta-D-galactosyl-(1-&gt;3)-beta-D-galactosyl-(1-&gt;4)-beta-D-xylosyl)-L-seryl-[protein] + UDP + H(+). Functionally, involved in cell wall biogenesis. Has a role in the addition of Gal-beta1,3 moeities to galactomannans and their subsequent pyruvylation. Has a role in meiosis. The chain is Beta-1,3-galactosyltransferase pvg3 (pvg3) from Schizosaccharomyces pombe (strain 972 / ATCC 24843) (Fission yeast).